The sequence spans 547 residues: Chaperonin GroEL (547 aa).

ATP contacts are provided by residues 30–33 (TLGP), K51, 87–91 (DGTTT), G415, 479–481 (NAA), and D495.

It belongs to the chaperonin (HSP60) family. As to quaternary structure, forms a cylinder of 14 subunits composed of two heptameric rings stacked back-to-back. Interacts with the co-chaperonin GroES.

It localises to the cytoplasm. The enzyme catalyses ATP + H2O + a folded polypeptide = ADP + phosphate + an unfolded polypeptide.. Functionally, together with its co-chaperonin GroES, plays an essential role in assisting protein folding. The GroEL-GroES system forms a nano-cage that allows encapsulation of the non-native substrate proteins and provides a physical environment optimized to promote and accelerate protein folding. In Cupriavidus necator (strain ATCC 17699 / DSM 428 / KCTC 22496 / NCIMB 10442 / H16 / Stanier 337) (Ralstonia eutropha), this protein is Chaperonin GroEL.